The following is a 267-amino-acid chain: Putative ankyrin repeat protein RF_1099 (267 aa).

ANK repeat units follow at residues 46 to 75 (DPIT…GVNQ), 78 to 107 (LGWV…SMSL), 136 to 165 (DGIT…NPNV), and 170 to 199 (TGMT…DPNI). The stretch at 238-265 (KQKIIKERNSIKTRNKEKEKEIKKLFNS) forms a coiled coil.

The protein is Putative ankyrin repeat protein RF_1099 of Rickettsia felis (strain ATCC VR-1525 / URRWXCal2) (Rickettsia azadi).